Here is a 130-residue protein sequence, read N- to C-terminus: Histone H2A type 1-K (130 aa).

The disordered stretch occupies residues 1 to 22 (MSGRGKQGGKARAKAKTRSSRA). N-acetylserine is present on S2. S2 carries the phosphoserine; by RPS6KA5 modification. R4 is subject to Citrulline; alternate. At R4 the chain carries Symmetric dimethylarginine; by PRMT5; alternate. N6-(2-hydroxyisobutyryl)lysine; alternate occurs at positions 6 and 10. K6 carries the N6-(beta-hydroxybutyryl)lysine; alternate modification. 2 positions are modified to N6-acetyllysine; alternate: K6 and K10. Over residues 7–19 (QGGKARAKAKTRS) the composition is skewed to basic residues. An N6-lactoyllysine; alternate modification is found at K10. Residue K10 is modified to N6-succinyllysine; alternate. Glycyl lysine isopeptide (Lys-Gly) (interchain with G-Cter in ubiquitin) cross-links involve residues K14 and K16. K37 is modified (N6-(2-hydroxyisobutyryl)lysine; alternate). K37 carries the N6-(beta-hydroxybutyryl)lysine; alternate modification. Residue K37 is modified to N6-crotonyllysine; alternate. N6-(2-hydroxyisobutyryl)lysine occurs at positions 75 and 76. Residue K96 is modified to N6-(2-hydroxyisobutyryl)lysine; alternate. An N6-succinyllysine; alternate modification is found at K96. K96 carries the post-translational modification N6-glutaryllysine; alternate. Position 105 is an N5-methylglutamine (Q105). An N6-(2-hydroxyisobutyryl)lysine; alternate modification is found at K119. N6-crotonyllysine; alternate occurs at positions 119 and 120. N6-glutaryllysine; alternate occurs at positions 119 and 120. The residue at position 120 (K120) is an N6-(beta-hydroxybutyryl)lysine; alternate. Residue K120 forms a Glycyl lysine isopeptide (Lys-Gly) (interchain with G-Cter in ubiquitin); alternate linkage. A Phosphothreonine; by DCAF1 modification is found at T121. K126 carries the N6-(beta-hydroxybutyryl)lysine; alternate modification. K126 bears the N6-crotonyllysine; alternate mark. Residue K126 is modified to N6-glutaryllysine; alternate.

Belongs to the histone H2A family. In terms of assembly, the nucleosome is a histone octamer containing two molecules each of H2A, H2B, H3 and H4 assembled in one H3-H4 heterotetramer and two H2A-H2B heterodimers. The octamer wraps approximately 147 bp of DNA. Post-translationally, deiminated on Arg-4 in granulocytes upon calcium entry. In terms of processing, monoubiquitination of Lys-120 (H2AK119Ub) by RING1, TRIM37 and RNF2/RING2 complex gives a specific tag for epigenetic transcriptional repression and participates in X chromosome inactivation of female mammals. It is involved in the initiation of both imprinted and random X inactivation. Ubiquitinated H2A is enriched in inactive X chromosome chromatin. Ubiquitination of H2A functions downstream of methylation of 'Lys-27' of histone H3 (H3K27me). H2AK119Ub by RNF2/RING2 can also be induced by ultraviolet and may be involved in DNA repair. Following DNA double-strand breaks (DSBs), it is ubiquitinated through 'Lys-63' linkage of ubiquitin moieties by the E2 ligase UBE2N and the E3 ligases RNF8 and RNF168, leading to the recruitment of repair proteins to sites of DNA damage. Ubiquitination at Lys-14 and Lys-16 (H2AK13Ub and H2AK15Ub, respectively) in response to DNA damage is initiated by RNF168 that mediates monoubiquitination at these 2 sites, and 'Lys-63'-linked ubiquitin are then conjugated to monoubiquitin; RNF8 is able to extend 'Lys-63'-linked ubiquitin chains in vitro. Deubiquitinated by USP51 at Lys-14 and Lys-16 (H2AK13Ub and H2AK15Ub, respectively) after damaged DNA is repaired. H2AK119Ub and ionizing radiation-induced 'Lys-63'-linked ubiquitination (H2AK13Ub and H2AK15Ub) are distinct events. Phosphorylation on Ser-2 (H2AS1ph) is enhanced during mitosis. Phosphorylation on Ser-2 by RPS6KA5/MSK1 directly represses transcription. Acetylation of H3 inhibits Ser-2 phosphorylation by RPS6KA5/MSK1. Phosphorylation at Thr-121 (H2AT120ph) by DCAF1 is present in the regulatory region of many tumor suppresor genes and down-regulates their transcription. Post-translationally, symmetric dimethylation on Arg-4 by the PRDM1/PRMT5 complex may play a crucial role in the germ-cell lineage. In terms of processing, glutamine methylation at Gln-105 (H2AQ104me) by FBL is specifically dedicated to polymerase I. It is present at 35S ribosomal DNA locus and impairs binding of the FACT complex. Crotonylation (Kcr) is specifically present in male germ cells and marks testis-specific genes in post-meiotic cells, including X-linked genes that escape sex chromosome inactivation in haploid cells. Crotonylation marks active promoters and enhancers and confers resistance to transcriptional repressors. It is also associated with post-meiotically activated genes on autosomes. Post-translationally, hydroxybutyrylation of histones is induced by starvation. In terms of processing, lactylated in macrophages by EP300/P300 by using lactoyl-CoA directly derived from endogenous or exogenous lactate, leading to stimulates gene transcription.

The protein resides in the nucleus. It localises to the chromosome. Functionally, core component of nucleosome. Nucleosomes wrap and compact DNA into chromatin, limiting DNA accessibility to the cellular machineries which require DNA as a template. Histones thereby play a central role in transcription regulation, DNA repair, DNA replication and chromosomal stability. DNA accessibility is regulated via a complex set of post-translational modifications of histones, also called histone code, and nucleosome remodeling. In Mus musculus (Mouse), this protein is Histone H2A type 1-K.